A 267-amino-acid polypeptide reads, in one-letter code: Exodeoxyribonuclease III (267 aa).

A Mg(2+)-binding site is contributed by E34. Y109 is an active-site residue. 3 residues coordinate Mg(2+): D151, N153, and D258. The active-site Proton donor/acceptor is D151.

The protein belongs to the DNA repair enzymes AP/ExoA family. Monomer. Mg(2+) serves as cofactor. Requires Mn(2+) as cofactor.

The catalysed reaction is Exonucleolytic cleavage in the 3'- to 5'-direction to yield nucleoside 5'-phosphates.. In terms of biological role, major apurinic-apyrimidinic endonuclease of E.coli. It removes the damaged DNA at cytosines and guanines by cleaving on the 3'-side of the AP site by a beta-elimination reaction. This chain is Exodeoxyribonuclease III (xthA), found in Haemophilus influenzae (strain ATCC 51907 / DSM 11121 / KW20 / Rd).